The chain runs to 222 residues: Probable pyridoxal 5'-phosphate synthase subunit SNO2 (222 aa).

Position 58 to 60 (58 to 60 (GES)) interacts with L-glutamine. C91 functions as the Nucleophile in the catalytic mechanism. L-glutamine contacts are provided by residues R120 and 151 to 152 (IR). Residues H197 and E199 each act as charge relay system in the active site.

This sequence belongs to the glutaminase PdxT/SNO family.

It catalyses the reaction aldehydo-D-ribose 5-phosphate + D-glyceraldehyde 3-phosphate + L-glutamine = pyridoxal 5'-phosphate + L-glutamate + phosphate + 3 H2O + H(+). The catalysed reaction is L-glutamine + H2O = L-glutamate + NH4(+). The protein operates within cofactor biosynthesis; pyridoxal 5'-phosphate biosynthesis. Its function is as follows. Catalyzes the hydrolysis of glutamine to glutamate and ammonia as part of the biosynthesis of pyridoxal 5'-phosphate. The resulting ammonia molecule is channeled to the active site of a SNZ isoform. This is Probable pyridoxal 5'-phosphate synthase subunit SNO2 (SNO2) from Saccharomyces cerevisiae (strain ATCC 204508 / S288c) (Baker's yeast).